The sequence spans 442 residues: MRRTRRPRFVLMNKMDDLNLHYRFLNWRRRIREIREVRAFRYQERFKHILVDGDTLSYHGNSGEVGCYVASRPLTKDSNYFEVSIVDSGVRGTIAVGLVPQYYSLDHQPGWLPDSVAYHADDGKLYNGRAKGRQFGSKCNSGDRIGCGIEPVSFDVQTAQIFFTKNGKRVGSTIMPMSPDGLFPAVGMHSLGEEVRLHLNAELGREDDSVMMVDSYEDEWGRLHDVRVCGTLLEYLGKGKSIVDVGLAQARHPLSTRSHYFEVEIVDPGEKCYIALGLARKDYPKNRHPGWSRGSVAYHADDGKIFHGSGVGDPFGPRCYKGDIMGCGIMFPRDYILDSEGDSDDSCDTVILSPTARAVRNVRNVMYLHQEGEEEEEEEEEEEDGEEIEPEHEGRKVVVFFTRNGKIIGKKDAVVPSGGFFPTIGMLSCGEKVKVDLHPLSG.

Residues 17–204 (DLNLHYRFLN…VRLHLNAELG (188 aa)) enclose the B30.2/SPRY domain. Positions 371-394 (EGEEEEEEEEEEEDGEEIEPEHEG) are disordered. Over residues 372-390 (GEEEEEEEEEEEDGEEIEP) the composition is skewed to acidic residues.

The protein is SPRY domain-containing protein 3 (SPRYD3) of Homo sapiens (Human).